Consider the following 468-residue polypeptide: UDP-N-acetylmuramate--L-alanine ligase (468 aa).

Position 114-120 (114-120 (GTHGKTT)) interacts with ATP.

The protein belongs to the MurCDEF family.

The protein localises to the cytoplasm. It catalyses the reaction UDP-N-acetyl-alpha-D-muramate + L-alanine + ATP = UDP-N-acetyl-alpha-D-muramoyl-L-alanine + ADP + phosphate + H(+). Its pathway is cell wall biogenesis; peptidoglycan biosynthesis. In terms of biological role, cell wall formation. The protein is UDP-N-acetylmuramate--L-alanine ligase of Methylobacterium radiotolerans (strain ATCC 27329 / DSM 1819 / JCM 2831 / NBRC 15690 / NCIMB 10815 / 0-1).